The sequence spans 615 residues: Sterol 3-beta-glucosyltransferase UGT80B1 (615 aa).

The interval 1-54 (MASNVFDHPLQELEGEDNGVKSEKASLLETSGSVDTTPEDSGHRSSDGHRGLDH) is disordered. Basic and acidic residues predominate over residues 40–54 (DSGHRSSDGHRGLDH).

The protein belongs to the glycosyltransferase 28 family. As to expression, expressed in developing seeds, seedlings, leaves and around the apical tip of cotyledons. In embryo, expressed in the seed coat and cotyledons.

The enzyme catalyses a sterol + UDP-alpha-D-glucose = a sterol 3-beta-D-glucoside + UDP + H(+). Its function is as follows. Involved in the biosynthesis of sterol glucosides. Catalyzes the synthesis of steryl glycosides (SGs) and acyl steryl glycosides (ASGs) which are the most abundant sterol derivatives in higher plants. Can act on several sterols like sitosterol, campesterol and stigmasterol. Is required for embryonic development, seed suberin accumulation, cutin formation and flavanoid accumulation in the seed coat. Both UGT80A2 and UGT80B1 are required for the normal production of SGs and ASGs in seeds. The polypeptide is Sterol 3-beta-glucosyltransferase UGT80B1 (Arabidopsis thaliana (Mouse-ear cress)).